We begin with the raw amino-acid sequence, 209 residues long: Ribosomal RNA large subunit methyltransferase E (209 aa).

5 residues coordinate S-adenosyl-L-methionine: Gly-63, Trp-65, Asp-83, Asp-99, and Asp-124. Lys-164 functions as the Proton acceptor in the catalytic mechanism.

The protein belongs to the class I-like SAM-binding methyltransferase superfamily. RNA methyltransferase RlmE family.

It localises to the cytoplasm. The enzyme catalyses uridine(2552) in 23S rRNA + S-adenosyl-L-methionine = 2'-O-methyluridine(2552) in 23S rRNA + S-adenosyl-L-homocysteine + H(+). Its function is as follows. Specifically methylates the uridine in position 2552 of 23S rRNA at the 2'-O position of the ribose in the fully assembled 50S ribosomal subunit. The polypeptide is Ribosomal RNA large subunit methyltransferase E (Aeromonas salmonicida (strain A449)).